We begin with the raw amino-acid sequence, 239 residues long: Uridylate kinase (239 aa).

13–16 (KVSG) serves as a coordination point for ATP. UMP is bound at residue Gly55. Gly56 and Arg60 together coordinate ATP. UMP contacts are provided by residues Asp75 and 136–143 (TGNPFFTT). The ATP site is built by Thr163, Gln164, Tyr169, and Asp172.

It belongs to the UMP kinase family. Homohexamer.

The protein localises to the cytoplasm. The catalysed reaction is UMP + ATP = UDP + ADP. The protein operates within pyrimidine metabolism; CTP biosynthesis via de novo pathway; UDP from UMP (UMPK route): step 1/1. Inhibited by UTP. Its function is as follows. Catalyzes the reversible phosphorylation of UMP to UDP. This chain is Uridylate kinase, found in Bartonella bacilliformis (strain ATCC 35685 / KC583 / Herrer 020/F12,63).